We begin with the raw amino-acid sequence, 201 residues long: 3-isopropylmalate dehydratase small subunit (201 aa).

The protein belongs to the LeuD family. LeuD type 1 subfamily. In terms of assembly, heterodimer of LeuC and LeuD.

The catalysed reaction is (2R,3S)-3-isopropylmalate = (2S)-2-isopropylmalate. It functions in the pathway amino-acid biosynthesis; L-leucine biosynthesis; L-leucine from 3-methyl-2-oxobutanoate: step 2/4. Catalyzes the isomerization between 2-isopropylmalate and 3-isopropylmalate, via the formation of 2-isopropylmaleate. This Roseobacter denitrificans (strain ATCC 33942 / OCh 114) (Erythrobacter sp. (strain OCh 114)) protein is 3-isopropylmalate dehydratase small subunit.